We begin with the raw amino-acid sequence, 317 residues long: Melanocyte-stimulating hormone receptor (317 aa).

The Extracellular segment spans residues 1 to 37; that stretch reads MPVQGSQRRLLGSLNSTPTATPHLGLAANQTGARCLE. An N-linked (GlcNAc...) asparagine glycan is attached at asparagine 29. Residues 38 to 63 traverse the membrane as a helical segment; the sequence is VSIPDGLFLSLGLVSLVENVLVVTAI. Topologically, residues 64 to 72 are cytoplasmic; that stretch reads AKNRNLHSP. The chain crosses the membrane as a helical span at residues 73 to 93; sequence MYCFICCLALSDLLVSGSNML. Residues 94–118 are Extracellular-facing; that stretch reads ETAVILLLEAGALAARAAVVQQLDN. The chain crosses the membrane as a helical span at residues 119-140; that stretch reads VIDVITCSSMLSSLCFLGAIAV. At 141-163 the chain is on the cytoplasmic side; sequence DRYISIFYALRYHSIVTLPRARR. The chain crosses the membrane as a helical span at residues 164–183; it reads AVAAIWVASVLFSMLFIAYY. The Extracellular segment spans residues 184–191; it reads DHAAVLLC. A helical membrane pass occupies residues 192-211; sequence LVVFFLAMLVLMAVLYVHML. Residues 212-240 are Cytoplasmic-facing; the sequence is ARACQHAQGIARLHKRQRPAHQSFGLKGA. A helical transmembrane segment spans residues 241–266; that stretch reads ATLTILLGIFFLCWGPFFLHLTLIVL. The Extracellular portion of the chain corresponds to 267-279; sequence CPQHPTCSCIFKN. A helical membrane pass occupies residues 280–300; it reads FNLFLTLIICNAIIDPLIYAF. At 301–317 the chain is on the cytoplasmic side; it reads RSQELRRTLKEVLLCSW. Residue cysteine 315 is the site of S-palmitoyl cysteine attachment.

This sequence belongs to the G-protein coupled receptor 1 family. Interacts with MGRN1, but does not undergo MGRN1-mediated ubiquitination; this interaction competes with GNAS-binding and thus inhibits agonist-induced cAMP production. Interacts with OPN3; the interaction results in a decrease in MC1R-mediated cAMP signaling and ultimately a decrease in melanin production in melanocytes.

It is found in the cell membrane. Functionally, receptor for MSH (alpha, beta and gamma) and ACTH. The activity of this receptor is mediated by G proteins which activate adenylate cyclase. Mediates melanogenesis, the production of eumelanin (black/brown) and phaeomelanin (red/yellow), via regulation of cAMP signaling in melanocytes. The protein is Melanocyte-stimulating hormone receptor (MC1R) of Erythrocebus patas (Red guenon).